A 311-amino-acid polypeptide reads, in one-letter code: Elongation factor Ts (311 aa).

The tract at residues 81–84 is involved in Mg(2+) ion dislocation from EF-Tu; that stretch reads TDFV.

The protein belongs to the EF-Ts family.

It localises to the cytoplasm. In terms of biological role, associates with the EF-Tu.GDP complex and induces the exchange of GDP to GTP. It remains bound to the aminoacyl-tRNA.EF-Tu.GTP complex up to the GTP hydrolysis stage on the ribosome. This Trichlorobacter lovleyi (strain ATCC BAA-1151 / DSM 17278 / SZ) (Geobacter lovleyi) protein is Elongation factor Ts.